Consider the following 402-residue polypeptide: Protein HAIKU1 (402 aa).

Disordered regions lie at residues 1-44, 63-135, 160-266, and 346-402; these read MDRP…LQTQ, TGSP…QQPM, SSLG…LVPS, and QPLT…WNDY. Residues 24–44 show a composition bias toward polar residues; the sequence is LHQSTFAASTSNGAAPRLQTQ. The short motif at 55–64 is the VQ element; the sequence is FRSIVQQLTG. Over residues 76 to 87 the composition is skewed to polar residues; the sequence is QNNSLRPQNTRL. A compositionally biased stretch (pro residues) spans 103-113; sequence VPLPSMAPPQS. The span at 160-173 shows a compositional bias: polar residues; sequence SSLGDSGPNANQMQ. The segment covering 218-240 has biased composition (low complexity); that stretch reads MPAQSQSQSQPQPQPQPQQHMMP. Pro residues predominate over residues 257 to 266; it reads YLPPPGLVPS. The span at 349–358 shows a compositional bias: polar residues; it reads TPNFSFSQIA. Residues 371 to 380 are compositionally biased toward pro residues; the sequence is QGPPQPPPSP. A compositionally biased stretch (low complexity) spans 381–390; it reads GLMFPLSPSG.

Interacts with WRKY10. Interacts with MPK6.

The protein resides in the nucleus. Modulates seed size by negatively regulating the cellularization of syncytial endosperm. May function by binding and modulating the activity of WRKY10 transcription factor. The chain is Protein HAIKU1 from Arabidopsis thaliana (Mouse-ear cress).